A 357-amino-acid chain; its full sequence is DENN domain-containing protein 10 (357 aa).

Residues 1–140 (MAAAEVADTQ…TKGICQSEEN (140 aa)) form the uDENN domain. The cDENN domain maps to 165 to 299 (QFGMETVILH…PEKSESHVIQ (135 aa)). One can recognise a dDENN domain in the interval 301 to 357 (IALKTREIFTNLAPFSEVSADGEKRVLNLEALKQKRFPPATENFLYHLAAAEQMLKI).

Belongs to the DENND10 family. Interacts with the coiled-coil heterodimer of CCDC22 and CCDC93; the interaction is direct. Interacts with RAB27A and RAB27B (GDP-bound forms preferentially).

It localises to the late endosome. Its function is as follows. Guanine nucleotide exchange factor (GEF) regulating homeostasis of late endocytic pathway, including endosomal positioning, maturation and secretion, possibly through activating Rab proteins such as RAB27A and RAB27B. Promotes the exchange of GDP to GTP, converting inactive GDP-bound RAB27A and RAB27B into their active GTP-bound form. The polypeptide is DENN domain-containing protein 10 (Homo sapiens (Human)).